We begin with the raw amino-acid sequence, 96 residues long: Myoglobin (96 aa).

The region spanning 1–96 (GLSDGEWQLV…AKTKELGFLG (96 aa)) is the Globin domain. S3 carries the phosphoserine modification. H61 contributes to the nitrite binding site. H61 provides a ligand contact to O2. T64 is modified (phosphothreonine).

This sequence belongs to the globin family. Monomeric.

It localises to the cytoplasm. Its subcellular location is the sarcoplasm. It catalyses the reaction Fe(III)-heme b-[protein] + nitric oxide + H2O = Fe(II)-heme b-[protein] + nitrite + 2 H(+). It carries out the reaction H2O2 + AH2 = A + 2 H2O. Functionally, monomeric heme protein which primary function is to store oxygen and facilitate its diffusion within muscle tissues. Reversibly binds oxygen through a pentacoordinated heme iron and enables its timely and efficient release as needed during periods of heightened demand. Depending on the oxidative conditions of tissues and cells, and in addition to its ability to bind oxygen, it also has a nitrite reductase activity whereby it regulates the production of bioactive nitric oxide. Under stress conditions, like hypoxia and anoxia, it also protects cells against reactive oxygen species thanks to its pseudoperoxidase activity. This Ailuropoda melanoleuca (Giant panda) protein is Myoglobin (MB).